The sequence spans 304 residues: HPr kinase/phosphorylase (304 aa).

Residues H136 and K157 contribute to the active site. 151 to 158 (GESGIGKS) provides a ligand contact to ATP. S158 is a Mg(2+) binding site. The active-site Proton acceptor; for phosphorylation activity. Proton donor; for dephosphorylation activity is D175. The interval 198–207 (LEVRGMGIID) is important for the catalytic mechanism of both phosphorylation and dephosphorylation. Residue E199 participates in Mg(2+) binding. R240 is a catalytic residue. The segment at 261–266 (PIRPGR) is important for the catalytic mechanism of dephosphorylation.

The protein belongs to the HPrK/P family. Homohexamer. Mg(2+) serves as cofactor.

It catalyses the reaction [HPr protein]-L-serine + ATP = [HPr protein]-O-phospho-L-serine + ADP + H(+). The enzyme catalyses [HPr protein]-O-phospho-L-serine + phosphate + H(+) = [HPr protein]-L-serine + diphosphate. Catalyzes the ATP- as well as the pyrophosphate-dependent phosphorylation of a specific serine residue in HPr, a phosphocarrier protein of the phosphoenolpyruvate-dependent sugar phosphotransferase system (PTS). HprK/P also catalyzes the pyrophosphate-producing, inorganic phosphate-dependent dephosphorylation (phosphorolysis) of seryl-phosphorylated HPr (P-Ser-HPr). The two antagonistic activities of HprK/P are regulated by several intracellular metabolites, which change their concentration in response to the absence or presence of rapidly metabolisable carbon sources (glucose, fructose, etc.) in the growth medium. Therefore, by controlling the phosphorylation state of HPr, HPrK/P is a sensor enzyme that plays a major role in the regulation of carbon metabolism and sugar transport: it mediates carbon catabolite repression (CCR), and regulates PTS-catalyzed carbohydrate uptake and inducer exclusion. This is HPr kinase/phosphorylase from Clostridium acetobutylicum (strain ATCC 824 / DSM 792 / JCM 1419 / IAM 19013 / LMG 5710 / NBRC 13948 / NRRL B-527 / VKM B-1787 / 2291 / W).